The chain runs to 309 residues: Probable manganese-dependent inorganic pyrophosphatase (309 aa).

Positions 9, 13, 15, 75, 97, and 149 each coordinate Mn(2+).

It belongs to the PPase class C family. Requires Mn(2+) as cofactor.

Its subcellular location is the cytoplasm. The enzyme catalyses diphosphate + H2O = 2 phosphate + H(+). The protein is Probable manganese-dependent inorganic pyrophosphatase of Bacillus cereus (strain ZK / E33L).